The sequence spans 271 residues: 3'-phosphoadenosine 5'-phosphate phosphatase (271 aa).

Mg(2+) is bound by residues Glu-73, Asp-91, Leu-93, Asp-94, and Asp-216. Glu-73 contacts substrate. Residues 93-96 (LDGT) and Asp-216 each bind substrate.

Belongs to the inositol monophosphatase superfamily. Homodimer. It depends on Mg(2+) as a cofactor.

It catalyses the reaction adenosine 3',5'-bisphosphate + H2O = AMP + phosphate. The enzyme catalyses beta-D-fructose 1,6-bisphosphate + H2O = beta-D-fructose 6-phosphate + phosphate. It carries out the reaction a myo-inositol phosphate + H2O = myo-inositol + phosphate. It functions in the pathway sulfur metabolism; sulfate assimilation. Its function is as follows. Phosphatase with a broad specificity. Its primary physiological function is to dephosphorylate 3'-phosphoadenosine 5'-phosphate (PAP) and 3'-phosphoadenosine 5'-phosphosulfate (PAPS). Thus, plays a role in mycobacterial sulfur metabolism, since it can serve as a key regulator of the sulfate assimilation pathway by controlling the pools of PAP and PAPS in the cell. To a lesser extent, is also able to hydrolyze inositol 1-phosphate (I-1-P), fructose 1,6-bisphosphate (FBP) (to fructose 6-phosphate (F-6-P)) and AMP in vitro, but this might not be significant in vivo. The protein is 3'-phosphoadenosine 5'-phosphate phosphatase (cysQ) of Mycobacterium leprae (strain TN).